We begin with the raw amino-acid sequence, 319 residues long: Protein HEXIM1 (319 aa).

Residues 1 to 22 (MELIKEETAPEDDSRGRQRDCR) are compositionally biased toward basic and acidic residues. Disordered regions lie at residues 1–111 (MELI…KKRR), 157–223 (LMEE…LQKD), 262–286 (NNWL…RVRE), and 299–319 (NELL…SQPS). Positions 24 to 35 (SVVSSKQVQRNQ) are enriched in polar residues. Residues 49–61 (PMCRDRSDPEPRT) show a composition bias toward basic and acidic residues. Basic residues predominate over residues 97-111 (GKKKHRRRPSKKKRR). Residues 185–202 (TASEDENFEAEEDDEEEG) show a composition bias toward acidic residues. Positions 203–216 (GGGSDGMGRPGQAG) are enriched in gly residues. The stretch at 240–306 (SKQELVREYL…ENNELLLKTP (67 aa)) forms a coiled coil. Residues 306–319 (PASNEPGLNQSQPS) are compositionally biased toward polar residues.

It belongs to the HEXIM family. In terms of assembly, homooligomer and heterooligomer. Core component of the 7SK RNP complex.

Its subcellular location is the nucleus. The protein resides in the cytoplasm. Its function is as follows. Transcriptional regulator which functions as a general RNA polymerase II transcription inhibitor. Core component of the 7SK RNP complex: in cooperation with 7SK snRNA sequesters P-TEFb in a large inactive 7SK snRNP complex preventing RNA polymerase II phosphorylation and subsequent transcriptional elongation. Plays a role in the regulation of DNA virus-mediated innate immune response by assembling into the HDP-RNP complex, a complex that serves as a platform for IRF3 phosphorylation and subsequent innate immune response activation through the cGAS-STING pathway. This Danio rerio (Zebrafish) protein is Protein HEXIM1 (hexim1).